Reading from the N-terminus, the 200-residue chain is Lipopolysaccharide core heptose(II)-phosphate phosphatase (200 aa).

Residues 1 to 25 form the signal peptide; sequence MLAFCRSSLKSKKYFIILLALAAIA.

This sequence belongs to the phosphoglycerate mutase family. Ais subfamily.

The protein localises to the periplasm. It functions in the pathway bacterial outer membrane biogenesis; lipopolysaccharide metabolism. Its function is as follows. Catalyzes the dephosphorylation of heptose(II) of the outer membrane lipopolysaccharide core. In Escherichia coli O17:K52:H18 (strain UMN026 / ExPEC), this protein is Lipopolysaccharide core heptose(II)-phosphate phosphatase.